The following is a 503-amino-acid chain: ATP synthase subunit alpha (503 aa).

Residue 169–176 (GDRKTGKT) coordinates ATP.

Belongs to the ATPase alpha/beta chains family. F-type ATPases have 2 components, CF(1) - the catalytic core - and CF(0) - the membrane proton channel. CF(1) has five subunits: alpha(3), beta(3), gamma(1), delta(1), epsilon(1). CF(0) has three main subunits: a(1), b(2) and c(9-12). The alpha and beta chains form an alternating ring which encloses part of the gamma chain. CF(1) is attached to CF(0) by a central stalk formed by the gamma and epsilon chains, while a peripheral stalk is formed by the delta and b chains.

It is found in the cell membrane. It catalyses the reaction ATP + H2O + 4 H(+)(in) = ADP + phosphate + 5 H(+)(out). Its function is as follows. Produces ATP from ADP in the presence of a proton gradient across the membrane. The alpha chain is a regulatory subunit. The chain is ATP synthase subunit alpha from Lactobacillus johnsonii (strain CNCM I-12250 / La1 / NCC 533).